Consider the following 206-residue polypeptide: Proteasome subunit beta type-2 (206 aa).

The protein belongs to the peptidase T1B family. In terms of assembly, the 26S proteasome consists of a 20S proteasome core and two 19S regulatory subunits. The 20S proteasome core is composed of 28 subunits that are arranged in four stacked rings, resulting in a barrel-shaped structure. The two end rings are each formed by seven alpha subunits, and the two central rings are each formed by seven beta subunits. The catalytic chamber with the active sites is on the inside of the barrel.

It localises to the cytoplasm. The protein resides in the nucleus. Non-catalytic component of the proteasome, a multicatalytic proteinase complex which is characterized by its ability to cleave peptides with Arg, Phe, Tyr, Leu, and Glu adjacent to the leaving group at neutral or slightly basic pH. The proteasome has an ATP-dependent proteolytic activity. This is Proteasome subunit beta type-2 (PSB4) from Trypanosoma brucei brucei.